Here is a 296-residue protein sequence, read N- to C-terminus: Protoheme IX farnesyltransferase (296 aa).

Helical transmembrane passes span 29 to 49, 54 to 74, 98 to 118, 121 to 141, 147 to 167, 175 to 195, 221 to 241, 246 to 266, and 275 to 295; these read LSGLVIVTSAGGLALAPGHVA, ALTVLATAAVVGAANALNCWM, FTALGLGIMVPVFALPVLALV, PLTAALAFVALVTYVAVYTPM, LALLVGAVPGAIPPLMGWTAA, GLALFALLFAWQLPHFLAVSI, WIAATAAALVPVSLLLVPLRV, YGAVAAVLGVALAGYAFAGVG, and NFFLATILYLTLLFVALFLGA.

This sequence belongs to the UbiA prenyltransferase family. Protoheme IX farnesyltransferase subfamily.

It localises to the cell inner membrane. The catalysed reaction is heme b + (2E,6E)-farnesyl diphosphate + H2O = Fe(II)-heme o + diphosphate. It participates in porphyrin-containing compound metabolism; heme O biosynthesis; heme O from protoheme: step 1/1. Functionally, converts heme B (protoheme IX) to heme O by substitution of the vinyl group on carbon 2 of heme B porphyrin ring with a hydroxyethyl farnesyl side group. This chain is Protoheme IX farnesyltransferase, found in Anaeromyxobacter sp. (strain Fw109-5).